The following is a 547-amino-acid chain: Serine/threonine-protein kinase RIO2 (547 aa).

The 177-residue stretch at 97 to 273 folds into the Protein kinase domain; that stretch reads VGNQMGVGKE…RDVKCIREFF (177 aa). Position 123 (Lys123) interacts with ATP. Asp228 acts as the Proton acceptor in catalysis. Ser332, Ser337, Ser350, Ser362, Ser385, and Ser390 each carry phosphoserine. The disordered stretch occupies residues 352–385; the sequence is LEKEADPADESGGSWCCSSTDSKQIKDGGLPEES. The Nuclear export signal motif lies at 399 to 408; sequence AVEEMERQVL. Positions 404-445 are disordered; the sequence is ERQVLPHRSVTEFSEESRRTENDGQPGQRSPAGSEDCDDEPP. Phosphoserine is present on residues Ser412, Ser417, Ser433, Ser437, and Ser543.

This sequence belongs to the protein kinase superfamily. RIO-type Ser/Thr kinase family. Associated with late 40S pre-ribosomal particles. Interacts with PLK1 (via its N-terminus). Requires Mg(2+) as cofactor. Post-translationally, autophosphorylated (in vitro). Phosphorylation affects the timing of the metaphase-anaphase transition.

The protein localises to the cytoplasm. The enzyme catalyses L-seryl-[protein] + ATP = O-phospho-L-seryl-[protein] + ADP + H(+). The catalysed reaction is L-threonyl-[protein] + ATP = O-phospho-L-threonyl-[protein] + ADP + H(+). Functionally, serine/threonine-protein kinase involved in the final steps of cytoplasmic maturation of the 40S ribosomal subunit. Involved in export of the 40S pre-ribosome particles (pre-40S) from the nucleus to the cytoplasm. Its kinase activity is required for the release of NOB1, PNO1 and LTV1 from the late pre-40S and the processing of 18S-E pre-rRNA to the mature 18S rRNA. May regulate the timing of the metaphase-anaphase transition during mitotic progression, and its phosphorylation, may regulate this function. The polypeptide is Serine/threonine-protein kinase RIO2 (Riok2) (Mus musculus (Mouse)).